Here is a 304-residue protein sequence, read N- to C-terminus: D-alanine--D-alanine ligase (304 aa).

Residues Lys103–Lys299 form the ATP-grasp domain. Glu129 to Ser184 contributes to the ATP binding site. Mg(2+) is bound by residues Asp253, Glu266, and Asn268.

Belongs to the D-alanine--D-alanine ligase family. Mg(2+) serves as cofactor. Mn(2+) is required as a cofactor.

The protein resides in the cytoplasm. It carries out the reaction 2 D-alanine + ATP = D-alanyl-D-alanine + ADP + phosphate + H(+). The protein operates within cell wall biogenesis; peptidoglycan biosynthesis. In terms of biological role, cell wall formation. This is D-alanine--D-alanine ligase from Neisseria gonorrhoeae (strain ATCC 700825 / FA 1090).